The sequence spans 632 residues: Chaperone protein DnaK (632 aa).

A Phosphothreonine; by autocatalysis modification is found at T198.

It belongs to the heat shock protein 70 family.

Acts as a chaperone. This is Chaperone protein DnaK from Rhodopseudomonas palustris (strain BisB18).